The chain runs to 631 residues: tRNA uridine 5-carboxymethylaminomethyl modification enzyme MnmG (631 aa).

Residues 15–20 (GAGHAG), isoleucine 127, and serine 182 contribute to the FAD site. NAD(+) is bound at residue 276–290 (GPRYCPSIEDKIVRF). Glutamine 373 provides a ligand contact to FAD.

This sequence belongs to the MnmG family. In terms of assembly, homodimer. Heterotetramer of two MnmE and two MnmG subunits. The cofactor is FAD.

It localises to the cytoplasm. In terms of biological role, NAD-binding protein involved in the addition of a carboxymethylaminomethyl (cmnm) group at the wobble position (U34) of certain tRNAs, forming tRNA-cmnm(5)s(2)U34. The polypeptide is tRNA uridine 5-carboxymethylaminomethyl modification enzyme MnmG (Streptococcus mutans serotype c (strain ATCC 700610 / UA159)).